The primary structure comprises 316 residues: Phosphate acyltransferase (316 aa).

The protein belongs to the PlsX family. Homodimer. Probably interacts with PlsY.

It localises to the cytoplasm. The enzyme catalyses a fatty acyl-[ACP] + phosphate = an acyl phosphate + holo-[ACP]. It functions in the pathway lipid metabolism; phospholipid metabolism. Its function is as follows. Catalyzes the reversible formation of acyl-phosphate (acyl-PO(4)) from acyl-[acyl-carrier-protein] (acyl-ACP). This enzyme utilizes acyl-ACP as fatty acyl donor, but not acyl-CoA. The polypeptide is Phosphate acyltransferase (Chlamydia felis (strain Fe/C-56) (Chlamydophila felis)).